A 261-amino-acid polypeptide reads, in one-letter code: Pimeloyl-[acyl-carrier protein] methyl ester esterase (261 aa).

In terms of domain architecture, AB hydrolase-1 spans 16–241 (LVLLHGWGLN…HAAHAPFISH (226 aa)). Substrate-binding positions include Trp22, 82–83 (SL), and 143–147 (FLALQ). Ser82 functions as the Nucleophile in the catalytic mechanism. Active-site residues include Asp207 and His235. His235 serves as a coordination point for substrate.

This sequence belongs to the AB hydrolase superfamily. Carboxylesterase BioH family. As to quaternary structure, monomer.

It localises to the cytoplasm. The enzyme catalyses 6-carboxyhexanoyl-[ACP] methyl ester + H2O = 6-carboxyhexanoyl-[ACP] + methanol + H(+). It participates in cofactor biosynthesis; biotin biosynthesis. Functionally, the physiological role of BioH is to remove the methyl group introduced by BioC when the pimeloyl moiety is complete. It allows to synthesize pimeloyl-ACP via the fatty acid synthetic pathway through the hydrolysis of the ester bonds of pimeloyl-ACP esters. This chain is Pimeloyl-[acyl-carrier protein] methyl ester esterase, found in Photorhabdus laumondii subsp. laumondii (strain DSM 15139 / CIP 105565 / TT01) (Photorhabdus luminescens subsp. laumondii).